The sequence spans 327 residues: MEQIPASIWTLTAGVVVTLISFWVGHHHGLLPEQASEQAPLVDNFFDIMLTIGTALFLVVQGAIILFVIRYRRRAGEEGDGLPVEGNLPLEAFWTAIPALIVIFLGIYSVDIFQRMGGLNPGDHAMHSMHAPKSGMAVVAQAPSKTTSDATALLAAAQPPEIGIGASPDVQGKAPDLVVDVAGMQYAWIFTYPDSGIVSGELHIPVGKDVQLNLSARDVIHSFWVPQFRLKQDAIPGVPTTRFKATKVGTYPVVCAELCGGYHGAMRTQVIVHTPEDFETWRRQNQAIATAPVIPSLRDRHIHEMGVTAELVAQVEAIAHDPSAEKL.

A signal peptide spans 1 to 23; it reads MEQIPASIWTLTAGVVVTLISFW. Transmembrane regions (helical) follow at residues 56–78 and 96–114; these read LFLV…AGEE and AIPA…DIFQ. Cu cation contacts are provided by His221, Cys255, Cys259, and His263.

This sequence belongs to the cytochrome c oxidase subunit 2 family. The cofactor is Cu cation.

It localises to the cell membrane. It carries out the reaction 4 Fe(II)-[cytochrome c] + O2 + 8 H(+)(in) = 4 Fe(III)-[cytochrome c] + 2 H2O + 4 H(+)(out). Its function is as follows. Subunits I and II form the functional core of the enzyme complex. Electrons originating in cytochrome c are transferred via heme a and Cu(A) to the binuclear center formed by heme a3 and Cu(B). The sequence is that of Cytochrome c oxidase subunit 2 (ctaC) from Thermostichus vulcanus (Synechococcus vulcanus).